The primary structure comprises 1033 residues: DNA polymerase I A, chloroplastic (1033 aa).

Over residues M1–P11 the composition is skewed to pro residues. Disordered regions lie at residues M1–P32 and T104–S142. Residues M1–S55 constitute a chloroplast transit peptide. Basic and acidic residues predominate over residues L115–R124. Residues S125–S142 are compositionally biased toward polar residues. The 3'-5' exonuclease domain maps to F321–E482. A polymerase region spans residues C696 to Y1030.

It belongs to the DNA polymerase type-A family. Expressed in shoot apical meristem, root apical meristem, leaf primordia and the marginal meristem.

It is found in the plastid. The protein resides in the chloroplast. The enzyme catalyses DNA(n) + a 2'-deoxyribonucleoside 5'-triphosphate = DNA(n+1) + diphosphate. Its activity is regulated as follows. Inhibited by dideoxythymidine-triphosphate (ddTTP), but not by aphidicolin and N-ethylmaleimide. In addition to polymerase activity, this DNA polymerase exhibits 5'-3' exonuclease activity. May be required for DNA replication and accumulation in plastids. This is DNA polymerase I A, chloroplastic from Oryza sativa subsp. japonica (Rice).